Reading from the N-terminus, the 435-residue chain is Cyclin-J-like protein (435 aa).

One can recognise a Cyclin N-terminal domain in the interval 14–191 (DVHCTLREKE…LLEAFSWNLC (178 aa)). Positions 120-142 (SSNSPASAPHPPPTPPQVAETTG) are disordered.

Belongs to the cyclin family. Cyclin J subfamily.

This is Cyclin-J-like protein (CCNJL) from Homo sapiens (Human).